Reading from the N-terminus, the 747-residue chain is H(+)/Cl(-) exchange transporter 4 (747 aa).

Residues 1–50 (MDFLDEPFPDVGTYEDFHTIDWLREKSRDTDRHRKITSKSKESIWEFIKS) form a required for localization in the endoplasmic reticulum region. Over 1–54 (MDFLDEPFPDVGTYEDFHTIDWLREKSRDTDRHRKITSKSKESIWEFIKSLLDA) the chain is Cytoplasmic. Helical transmembrane passes span 55 to 92 (WSGW…VCLS) and 138 to 161 (LNYL…VRVF). The Selectivity filter part_1 motif lies at 167-171 (GSGIP). Ser168 provides a ligand contact to chloride. The segment at residues 170–177 (IPEIKTIL) is an intramembrane region (helical). Transmembrane regions (helical) follow at residues 187–205 (GKWT…VSSG) and 211–230 (EGPL…SLFS). Positions 209-213 (GKEGP) match the Selectivity filter part_2 motif. Intramembrane regions (helical) lie at residues 242–254 (VLSA…VSVA) and 258–266 (PIGGVLFSL). The next 5 membrane-spanning stretches (helical) occupy residues 278 to 296 (LWRS…RSIN), 320 to 345 (FPFI…AWCR), 352 to 372 (LGKY…IIAY), 429 to 449 (MWQL…TFGM), and 454 to 473 (GLFI…VGIG). A Selectivity filter part_3 motif is present at residues 454–458 (GLFIP). Chloride is bound at residue Phe456. 2 intramembrane regions (helical) span residues 501 to 515 (GLYA…LGGV) and 519 to 530 (TVSLVVIMFELT). An intramembrane region (note=Loop between two helices) is located at residues 531 to 534 (GGLE). The helical transmembrane segment at 535-553 (YIVPLMAAAVTSKWVADAF) threads the bilayer. Over 554–747 (GKEGIYEAHI…NQDPESIIFN (194 aa)) the chain is Cytoplasmic. Tyr559 contacts chloride. In terms of domain architecture, CBS 1 spans 587-653 (MRPRRGEPPL…AIKNARQRQE (67 aa)). ATP is bound by residues Ser597 and 618 to 620 (YNG). A required for localization in the endoplasmic reticulum region spans residues 654 to 683 (GIVSNSIMYFTEEPPELPANSPHPLKLRRI). In terms of domain architecture, CBS 2 spans 684–742 (LNLSPFTVTDHTPMETVVDIFRKLGLRQCLVTRSGRLLGIITKKDVLRHMAQMANQDPE). 725-728 (TKKD) contributes to the ATP binding site.

This sequence belongs to the chloride channel (TC 2.A.49) family. ClC-4/CLCN4 subfamily. As to expression, strongly expressed in liver and brain, but also in heart, muscle, kidney and spleen.

Its subcellular location is the early endosome membrane. The protein resides in the late endosome membrane. It localises to the endoplasmic reticulum membrane. It is found in the lysosome membrane. The protein localises to the recycling endosome membrane. Strongly outwardly rectifying, electrogenic H(+)/Cl(-)exchanger which mediates the exchange of chloride ions against protons. The CLC channel family contains both chloride channels and proton-coupled anion transporters that exchange chloride or another anion for protons. The presence of conserved gating glutamate residues is typical for family members that function as antiporters. This Rattus norvegicus (Rat) protein is H(+)/Cl(-) exchange transporter 4 (Clcn4).